The following is a 749-amino-acid chain: Disintegrin and metalloproteinase domain-containing protein 10 (749 aa).

Residues Met-1–Gly-18 form the signal peptide. The propeptide occupies Gly-19 to Arg-214. A Cysteine switch motif is present at residues Gly-171–Val-178. Cys-173 contacts Zn(2+). Over Thr-215–Glu-673 the chain is Extracellular. In terms of domain architecture, Peptidase M12B spans Asn-221 to Gly-457. 17 disulfides stabilise this stretch: Cys-223-Cys-314, Cys-345-Cys-452, Cys-400-Cys-436, Cys-461-Cys-496, Cys-472-Cys-485, Cys-474-Cys-480, Cys-484-Cys-516, Cys-504-Cys-512, Cys-511-Cys-537, Cys-525-Cys-544, Cys-531-Cys-563, Cys-556-Cys-568, Cys-573-Cys-599, Cys-581-Cys-608, Cys-583-Cys-598, Cys-595-Cys-640, and Cys-633-Cys-646. Asn-268 and Asn-279 each carry an N-linked (GlcNAc...) asparagine glycan. Residue His-384 coordinates Zn(2+). Residue Glu-385 is part of the active site. Residues His-388 and His-394 each contribute to the Zn(2+) site. Asn-440 carries an N-linked (GlcNAc...) asparagine glycan. A Disintegrin domain is found at Gln-458–Asn-552. Residue Asn-552 is glycosylated (N-linked (GlcNAc...) asparagine). A helical transmembrane segment spans residues Trp-674–Ile-697. Residues Lys-698–Arg-749 lie on the Cytoplasmic side of the membrane. The interval Pro-705–Arg-749 is disordered. The SH3-binding signature appears at Pro-709 to Pro-716. Thr-720 bears the Phosphothreonine mark. The SH3-binding motif lies at Arg-723–Pro-729. Residues Arg-735–Arg-749 form an interaction with AP2A1, AP2A2 and AP2M1 region.

In terms of assembly, forms a ternary EFNA5-EPHA3-ADAM10 complex mediating EFNA5 extracellular domain shedding by ADAM10 which regulates the EFNA5-EPHA3 complex internalization and function, the cleavage occurs in trans, with ADAM10 and its substrate being on the membranes of opposing cells. Interacts with the clathrin adapter AP2 complex subunits AP2A1, AP2A2, AP2B1, and AP2M1; this interaction facilitates ADAM10 endocytosis from the plasma membrane during long-term potentiation in hippocampal neurons. Forms a ternary complex composed of ADAM10, EPHA4 and CADH1; within the complex, ADAM10 cleaves CADH1 which disrupts adherens junctions. Interacts with EPHA2. Interacts with NGF in a divalent cation-dependent manner. Interacts with TSPAN14; the interaction promotes ADAM10 maturation and cell surface expression. Interacts with TSPAN5, TSPAN10, TSPAN14, TSPAN15, TSPAN17 and TSPAN33; these interactions regulate ADAM10 substrate specificity, endocytosis and turnover. Interacts (via extracellular domain) with TSPAN33 (via extracellular domain) and (via cytoplasmic domain) with AFDN; interaction with TSPAN33 allows the docking of ADAM10 to zonula adherens through a PDZ11-dependent interaction between TSPAN33 and PLEKHA7 while interaction with AFDN locks ADAM10 at zonula adherens. Interacts with DLG1; this interaction recruits ADAM10 to the cell membrane during long-term depression in hippocampal neurons. Interacts (via extracellular domain) with BACE1 (via extracellular domain). Interacts with FAM171A1. The cofactor is Zn(2+). The precursor is cleaved by furin and PCSK7. Expressed in brain, kidney, lung, spleen, ovary and testis.

The protein localises to the cell membrane. It localises to the golgi apparatus membrane. It is found in the cytoplasmic vesicle. The protein resides in the clathrin-coated vesicle. Its subcellular location is the cell projection. The protein localises to the axon. It localises to the dendrite. It is found in the cell junction. The protein resides in the adherens junction. Its subcellular location is the cytoplasm. It catalyses the reaction Endopeptidase of broad specificity.. With respect to regulation, catalytically inactive when the propeptide is intact and associated with the mature enzyme. The disintegrin and cysteine-rich regions modulate access of substrates to exerts an inhibitory effect on the cleavage of ADAM10 substrates. Its function is as follows. Transmembrane metalloprotease which mediates the ectodomain shedding of a myriad of transmembrane proteins, including adhesion proteins, growth factor precursors and cytokines being essential for development and tissue homeostasis. Associates with six members of the tetraspanin superfamily TspanC8 which regulate its exit from the endoplasmic reticulum and its substrate selectivity. Cleaves the membrane-bound precursor of TNF-alpha at '76-Ala-|-Val-77' to its mature soluble form. Responsible for the proteolytical release of soluble JAM3 from endothelial cells surface. Responsible for the proteolytic release of several other cell-surface proteins, including heparin-binding epidermal growth-like factor, ephrin-A2, CD44, CDH2 and for constitutive and regulated alpha-secretase cleavage of amyloid precursor protein (APP). Contributes to the normal cleavage of the cellular prion protein. Involved in the cleavage of the adhesion molecule L1 at the cell surface and in released membrane vesicles, suggesting a vesicle-based protease activity. Also controls the proteolytic processing of Notch and mediates lateral inhibition during neurogenesis. Required for the development of type 1 transitional B cells into marginal zone B cells, probably by cleaving Notch. Responsible for the FasL ectodomain shedding and for the generation of the remnant ADAM10-processed FasL (FasL APL) transmembrane form. Also cleaves the ectodomain of the integral membrane proteins CORIN and ITM2B. Mediates the proteolytic cleavage of LAG3, leading to release the secreted form of LAG3. Mediates the proteolytic cleavage of IL6R and IL11RA, leading to the release of secreted forms of IL6R and IL11RA. Enhances the cleavage of CHL1 by BACE1. Cleaves NRCAM. Cleaves TREM2, resulting in shedding of the TREM2 ectodomain. Involved in the development and maturation of glomerular and coronary vasculature. During development of the cochlear organ of Corti, promotes pillar cell separation by forming a ternary complex with CADH1 and EPHA4 and cleaving CADH1 at adherens junctions. May regulate the EFNA5-EPHA3 signaling. Regulates leukocyte transmigration as a sheddase for the adherens junction protein VE-cadherin/CDH5 in endothelial cells. The chain is Disintegrin and metalloproteinase domain-containing protein 10 (Adam10) from Rattus norvegicus (Rat).